The following is a 505-amino-acid chain: 2-methylcitrate dehydratase (505 aa).

This sequence belongs to the PrpD family. Monomer.

It catalyses the reaction (2S,3S)-2-methylcitrate = 2-methyl-cis-aconitate + H2O. The enzyme catalyses citrate = D-threo-isocitrate. The protein operates within organic acid metabolism; propanoate degradation. It participates in carbohydrate metabolism; tricarboxylic acid cycle; isocitrate from oxaloacetate: step 1/2. Functionally, involved in the catabolism of short chain fatty acids (SCFA) via the tricarboxylic acid (TCA)(acetyl degradation route) and via the 2-methylcitrate cycle I (propionate degradation route). Catalyzes the dehydration of 2-methylcitrate (2-MC) to yield the cis isomer of 2-methyl-aconitate. Could also catalyze the dehydration of citrate and the hydration of cis-aconitate. The polypeptide is 2-methylcitrate dehydratase (Mycobacterium tuberculosis (strain ATCC 35801 / TMC 107 / Erdman)).